The chain runs to 105 residues: Large ribosomal subunit protein eL36 (105 aa).

The disordered stretch occupies residues 86–105 (QAGKKKRDDIANINRKASAK).

This sequence belongs to the eukaryotic ribosomal protein eL36 family.

In Dictyostelium discoideum (Social amoeba), this protein is Large ribosomal subunit protein eL36 (rpl36).